Consider the following 316-residue polypeptide: Glycerol-3-phosphate dehydrogenase [NAD(P)+] (316 aa).

NADPH-binding residues include S14, F15, R35, and K109. Sn-glycerol 3-phosphate is bound by residues K109 and G137. A141 is an NADPH binding site. Positions 192, 248, 258, 259, and 260 each coordinate sn-glycerol 3-phosphate. K192 functions as the Proton acceptor in the catalytic mechanism. R259 provides a ligand contact to NADPH. NADPH-binding residues include L283 and E285.

The protein belongs to the NAD-dependent glycerol-3-phosphate dehydrogenase family.

The protein localises to the cytoplasm. The enzyme catalyses sn-glycerol 3-phosphate + NAD(+) = dihydroxyacetone phosphate + NADH + H(+). The catalysed reaction is sn-glycerol 3-phosphate + NADP(+) = dihydroxyacetone phosphate + NADPH + H(+). It functions in the pathway membrane lipid metabolism; glycerophospholipid metabolism. Its function is as follows. Catalyzes the reduction of the glycolytic intermediate dihydroxyacetone phosphate (DHAP) to sn-glycerol 3-phosphate (G3P), the key precursor for phospholipid synthesis. This is Glycerol-3-phosphate dehydrogenase [NAD(P)+] from Rickettsia prowazekii (strain Madrid E).